The primary structure comprises 320 residues: Ferrochelatase (320 aa).

Residues His-194 and Glu-275 each contribute to the Fe cation site.

It belongs to the ferrochelatase family. Monomer.

The protein resides in the cytoplasm. The catalysed reaction is heme b + 2 H(+) = protoporphyrin IX + Fe(2+). The protein operates within porphyrin-containing compound metabolism; protoheme biosynthesis; protoheme from protoporphyrin-IX: step 1/1. Its function is as follows. Catalyzes the ferrous insertion into protoporphyrin IX. The polypeptide is Ferrochelatase (Salmonella arizonae (strain ATCC BAA-731 / CDC346-86 / RSK2980)).